The following is an 84-amino-acid chain: Putative protein BCE-1 (84 aa).

This Homo sapiens (Human) protein is Putative protein BCE-1 (BCE1).